A 96-amino-acid polypeptide reads, in one-letter code: Large ribosomal subunit protein uL4 (96 aa).

The interval 77–96 (RAPNKKVKRRELKKNPLKNL) is disordered. Residues 79 to 96 (PNKKVKRRELKKNPLKNL) show a composition bias toward basic residues.

This sequence belongs to the universal ribosomal protein uL4 family. In terms of assembly, component of the large ribosomal subunit.

The protein resides in the cytoplasm. Functionally, component of the large ribosomal subunit. The ribosome is a large ribonucleoprotein complex responsible for the synthesis of proteins in the cell. This chain is Large ribosomal subunit protein uL4 (rpl4), found in Xenopus tropicalis (Western clawed frog).